The sequence spans 62 residues: Large ribosomal subunit protein uL30 (62 aa).

The protein belongs to the universal ribosomal protein uL30 family. In terms of assembly, part of the 50S ribosomal subunit.

The polypeptide is Large ribosomal subunit protein uL30 (Pseudoalteromonas atlantica (strain T6c / ATCC BAA-1087)).